The primary structure comprises 576 residues: Trehalase 2 (576 aa).

The protein belongs to the glycosyl hydrolase 15 family.

The catalysed reaction is alpha,alpha-trehalose + H2O = alpha-D-glucose + beta-D-glucose. The protein operates within glycan degradation; trehalose degradation; D-glucose from alpha,alpha-trehalose: step 1/1. Functionally, catalyzes the hydrolysis of alpha,alpha-trehalose into two molecules of D-glucose. This is Trehalase 2 (treH2) from Sulfolobus acidocaldarius (strain ATCC 33909 / DSM 639 / JCM 8929 / NBRC 15157 / NCIMB 11770).